A 144-amino-acid polypeptide reads, in one-letter code: Large ribosomal subunit protein uL15 (144 aa).

The segment at 1 to 53 (MYLNTLAPAEGAKHSAKRLGRGIGSGLGKTGGRGHKGQKSRTGGGVRRGFEGG) is disordered. The span at 21–31 (RGIGSGLGKTG) shows a compositional bias: gly residues.

The protein belongs to the universal ribosomal protein uL15 family. In terms of assembly, part of the 50S ribosomal subunit.

Its function is as follows. Binds to the 23S rRNA. The protein is Large ribosomal subunit protein uL15 of Mannheimia succiniciproducens (strain KCTC 0769BP / MBEL55E).